The following is a 393-amino-acid chain: Chalcone synthase 3 (393 aa).

Cysteine 166 is an active-site residue.

Belongs to the thiolase-like superfamily. Chalcone/stilbene synthases family.

The enzyme catalyses (E)-4-coumaroyl-CoA + 3 malonyl-CoA + 3 H(+) = 2',4,4',6'-tetrahydroxychalcone + 3 CO2 + 4 CoA. The protein operates within secondary metabolite biosynthesis; flavonoid biosynthesis. Its function is as follows. The primary product of this enzyme is 4,2',4',6'-tetrahydroxychalcone (also termed naringenin-chalcone or chalcone) which can under specific conditions spontaneously isomerize into naringenin. The polypeptide is Chalcone synthase 3 (CHS3) (Ruta graveolens (Common rue)).